An 823-amino-acid polypeptide reads, in one-letter code: Leucine--tRNA ligase (823 aa).

Residues Pro-42 to His-52 carry the 'HIGH' region motif. Residues Lys-575–Ser-579 carry the 'KMSKS' region motif. ATP is bound at residue Lys-578.

It belongs to the class-I aminoacyl-tRNA synthetase family.

It is found in the cytoplasm. It carries out the reaction tRNA(Leu) + L-leucine + ATP = L-leucyl-tRNA(Leu) + AMP + diphosphate. This is Leucine--tRNA ligase from Legionella pneumophila subsp. pneumophila (strain Philadelphia 1 / ATCC 33152 / DSM 7513).